The chain runs to 448 residues: tRNA(Ile)-lysidine synthase (448 aa).

29-34 (SGGVDS) is a binding site for ATP.

This sequence belongs to the tRNA(Ile)-lysidine synthase family.

The protein resides in the cytoplasm. The enzyme catalyses cytidine(34) in tRNA(Ile2) + L-lysine + ATP = lysidine(34) in tRNA(Ile2) + AMP + diphosphate + H(+). Ligates lysine onto the cytidine present at position 34 of the AUA codon-specific tRNA(Ile) that contains the anticodon CAU, in an ATP-dependent manner. Cytidine is converted to lysidine, thus changing the amino acid specificity of the tRNA from methionine to isoleucine. The sequence is that of tRNA(Ile)-lysidine synthase from Azoarcus sp. (strain BH72).